Here is a 618-residue protein sequence, read N- to C-terminus: Proline--tRNA ligase (618 aa).

The protein belongs to the class-II aminoacyl-tRNA synthetase family. ProS type 1 subfamily. In terms of assembly, homodimer.

It is found in the cytoplasm. It catalyses the reaction tRNA(Pro) + L-proline + ATP = L-prolyl-tRNA(Pro) + AMP + diphosphate. In terms of biological role, catalyzes the attachment of proline to tRNA(Pro) in a two-step reaction: proline is first activated by ATP to form Pro-AMP and then transferred to the acceptor end of tRNA(Pro). As ProRS can inadvertently accommodate and process non-cognate amino acids such as alanine and cysteine, to avoid such errors it has two additional distinct editing activities against alanine. One activity is designated as 'pretransfer' editing and involves the tRNA(Pro)-independent hydrolysis of activated Ala-AMP. The other activity is designated 'posttransfer' editing and involves deacylation of mischarged Ala-tRNA(Pro). The misacylated Cys-tRNA(Pro) is not edited by ProRS. The sequence is that of Proline--tRNA ligase from Streptococcus pyogenes serotype M28 (strain MGAS6180).